We begin with the raw amino-acid sequence, 517 residues long: Probable bifunctional methylthioribulose-1-phosphate dehydratase/enolase-phosphatase E1 (517 aa).

A methylthioribulose-1-phosphate dehydratase region spans residues 1–242 (MACSGCSCEA…CIKLYQLGID (242 aa)). Cys-114 serves as a coordination point for substrate. Residues His-132 and His-134 each contribute to the Zn(2+) site. The active-site Proton donor/acceptor; for methylthioribulose-1-phosphate dehydratase activity is Glu-157. His-207 contacts Zn(2+). The interval 278–517 (VVLDIEGTTT…FRTIKSFSEI (240 aa)) is enolase-phosphatase E1. The Mg(2+) site is built by Asp-281 and Glu-283. Substrate is bound by residues 416–417 (SS) and Lys-450. Asp-476 provides a ligand contact to Mg(2+).

In the N-terminal section; belongs to the aldolase class II family. MtnB subfamily. It in the C-terminal section; belongs to the HAD-like hydrolase superfamily. MasA/MtnC family. It depends on Zn(2+) as a cofactor. Mg(2+) serves as cofactor.

It catalyses the reaction 5-(methylsulfanyl)-D-ribulose 1-phosphate = 5-methylsulfanyl-2,3-dioxopentyl phosphate + H2O. The enzyme catalyses 5-methylsulfanyl-2,3-dioxopentyl phosphate + H2O = 1,2-dihydroxy-5-(methylsulfanyl)pent-1-en-3-one + phosphate. The protein operates within amino-acid biosynthesis; L-methionine biosynthesis via salvage pathway; L-methionine from S-methyl-5-thio-alpha-D-ribose 1-phosphate: step 2/6. Its pathway is amino-acid biosynthesis; L-methionine biosynthesis via salvage pathway; L-methionine from S-methyl-5-thio-alpha-D-ribose 1-phosphate: step 3/6. It participates in amino-acid biosynthesis; L-methionine biosynthesis via salvage pathway; L-methionine from S-methyl-5-thio-alpha-D-ribose 1-phosphate: step 4/6. The sequence is that of Probable bifunctional methylthioribulose-1-phosphate dehydratase/enolase-phosphatase E1 from Zea mays (Maize).